The sequence spans 955 residues: MSQLLQQLGTDNEFIRRHNGPASSQHQHMLNTVGAETLEKLIEETVPSSIRLPQPMQLPHGLSENAMLAELKQIAQQNTLNTSYIGQGYYNTHTPNVILRNVFENPGWYTAYTPYQPEISQGRLEALLNYQQMVMDLTGLDIANASLLDEATAAAEAMTLCKRGGKNKSSTFFVADDVHPQTLAVIKTRAKFIGFDVVVDTDSNLDSHDVFGALLQYPGTTGEVKDLTTLIEQAHAKKTLVVVATDLLASVLLKPVGEMGADIAIGSAQRFGVPMGYGGPHAAFMATREKLKRSMPGRVIGVSIDSKGNQALRMAMQTREQHIRREKATSNICTAQALLANMASFYAVYHGPEGLKTIARRVHHFTAIVAKSLQSAGFELAHQHFFDTLTVKTEQQTDILYTKALAASINLRKFDTELGISFDETTTVSDLVALLAVFGVDNAECDSLSNDIGQDEFAAIPEACRRTSSFLTHPVFNTHHSETQMLRYLKKLENKDFSLTHGMIPLGSCTMKLNAVAEMLPVTWPEFGGIHPFAPLNQAAGYTTLATSLKSMLCEITGYDDFSLQPNSGASGEYAGLIAIQRYHESRNEGHRNVCLIPSSAHGTNPATASMVSMKVVVVKCDDNGNIDMIDLAEKIAKHQENLSSIMITYPSTHGVYEEQVREVCDMVHDAGGQVYLDGANMNAQVGLTSPGFIGSDVSHLNLHKTFCIPHGGGGPGMGPIGVKSHLAPFLPGHSENGVQGSDYAVSAADLGSASILPISWAYIAMMGEMGLTEATKVAILNANYVMDRLRPHYPVLYRGTNGRIAHECIIDIRPLKEATGISEEDIAKRLMDFGFHAPTMSFPVAGTLMIEPTESEDLAELDRFCEAMIAIREEMNKVQQGEWPLDNNPLVNAPHTQVDLMSNEWDHPYTREVACFPSVQAKASKYWPTVNRVDNVYGDRNLICSCPSIDSYEE.

At Lys-705 the chain carries N6-(pyridoxal phosphate)lysine.

The protein belongs to the GcvP family. As to quaternary structure, the glycine cleavage system is composed of four proteins: P, T, L and H. The cofactor is pyridoxal 5'-phosphate.

The catalysed reaction is N(6)-[(R)-lipoyl]-L-lysyl-[glycine-cleavage complex H protein] + glycine + H(+) = N(6)-[(R)-S(8)-aminomethyldihydrolipoyl]-L-lysyl-[glycine-cleavage complex H protein] + CO2. The glycine cleavage system catalyzes the degradation of glycine. The P protein binds the alpha-amino group of glycine through its pyridoxal phosphate cofactor; CO(2) is released and the remaining methylamine moiety is then transferred to the lipoamide cofactor of the H protein. In Aliivibrio salmonicida (strain LFI1238) (Vibrio salmonicida (strain LFI1238)), this protein is Glycine dehydrogenase (decarboxylating).